The chain runs to 95 residues: Large ribosomal subunit protein uL23 (95 aa).

Belongs to the universal ribosomal protein uL23 family. Part of the 50S ribosomal subunit. Contacts protein L29, and trigger factor when it is bound to the ribosome.

Functionally, one of the early assembly proteins it binds 23S rRNA. One of the proteins that surrounds the polypeptide exit tunnel on the outside of the ribosome. Forms the main docking site for trigger factor binding to the ribosome. This Desulfitobacterium hafniense (strain DSM 10664 / DCB-2) protein is Large ribosomal subunit protein uL23.